Consider the following 215-residue polypeptide: MNAPAPSSVRRTKKLPPLRVGIGGPVGSGKTTLLEMLCKAMRDRYDLVAITNDIYTKEDQRLLTVAGALPEERIMGVETGGCPHTAIREDASINLEAVDRMLARFPDADIVFIESGGDNLAATFSPELSDLTIYVIDVAGGEKIPRKGGPGITKSDLLVINKTDLAPLVGANLDVMASDTRKMRGERPYVMTNLKALDGVADVIAFIEKKGLLTV.

A GTP-binding site is contributed by 24 to 31 (GPVGSGKT).

It belongs to the SIMIBI class G3E GTPase family. UreG subfamily. In terms of assembly, homodimer. UreD, UreF and UreG form a complex that acts as a GTP-hydrolysis-dependent molecular chaperone, activating the urease apoprotein by helping to assemble the nickel containing metallocenter of UreC. The UreE protein probably delivers the nickel.

It localises to the cytoplasm. Functionally, facilitates the functional incorporation of the urease nickel metallocenter. This process requires GTP hydrolysis, probably effectuated by UreG. The chain is Urease accessory protein UreG from Burkholderia orbicola (strain MC0-3).